Reading from the N-terminus, the 494-residue chain is uncharacterized protein (494 aa).

Positions 4 to 82 (FTITVKKTEG…NMIIEPLEGF (79 aa)) constitute a 2Fe-2S ferredoxin-type domain. Cys46, Cys51, Cys54, and Cys66 together coordinate [2Fe-2S] cluster. 2 consecutive 4Fe-4S ferredoxin-type domains span residues 127–157 (DLKD…NYPG) and 178–208 (EKEA…IVHN). [4Fe-4S] cluster is bound by residues Cys137, Cys140, Cys143, Cys147, Cys189, Cys192, Cys195, and Cys199.

This sequence belongs to the succinate dehydrogenase/fumarate reductase iron-sulfur protein family.

This is an uncharacterized protein from Methanococcus maripaludis (strain DSM 14266 / JCM 13030 / NBRC 101832 / S2 / LL).